A 953-amino-acid chain; its full sequence is UvrABC system protein A (953 aa).

Residue 33–40 coordinates ATP; sequence GLSGSGKS. 2 consecutive ABC transporter domains span residues 320–599 and 619–949; these read WGST…EESI and GHDN…RYLK. Position 652–659 (652–659) interacts with ATP; that stretch reads GVSGSGKS. The segment at 752–778 adopts a C4-type zinc-finger fold; it reads CEACQGDGLIKIEMHFLPDVYVKCDIC.

The protein belongs to the ABC transporter superfamily. UvrA family. Forms a heterotetramer with UvrB during the search for lesions.

The protein resides in the cytoplasm. The UvrABC repair system catalyzes the recognition and processing of DNA lesions. UvrA is an ATPase and a DNA-binding protein. A damage recognition complex composed of 2 UvrA and 2 UvrB subunits scans DNA for abnormalities. When the presence of a lesion has been verified by UvrB, the UvrA molecules dissociate. The protein is UvrABC system protein A of Rickettsia typhi (strain ATCC VR-144 / Wilmington).